We begin with the raw amino-acid sequence, 573 residues long: CTP synthase (573 aa).

An amidoligase domain region spans residues 1–281 (MGQTRIQART…DAYVVRRLGL (281 aa)). Ser23 provides a ligand contact to CTP. A UTP-binding site is contributed by Ser23. Residues 24–29 (SLGKGL) and Asp81 contribute to the ATP site. Positions 81 and 155 each coordinate Mg(2+). Residues 162–164 (DIE), 202–207 (KTKPTQ), and Lys238 each bind CTP. UTP-binding positions include 202-207 (KTKPTQ) and Lys238. The 249-residue stretch at 306–554 (EVALVGKYVD…IAAALKYKLA (249 aa)) folds into the Glutamine amidotransferase type-1 domain. L-glutamine is bound at residue Gly369. Catalysis depends on Cys396, which acts as the Nucleophile; for glutamine hydrolysis. L-glutamine contacts are provided by residues 397 to 400 (LGLQ), Glu419, and Arg480. Active-site residues include His527 and Glu529.

This sequence belongs to the CTP synthase family. As to quaternary structure, homotetramer.

The catalysed reaction is UTP + L-glutamine + ATP + H2O = CTP + L-glutamate + ADP + phosphate + 2 H(+). It carries out the reaction L-glutamine + H2O = L-glutamate + NH4(+). The enzyme catalyses UTP + NH4(+) + ATP = CTP + ADP + phosphate + 2 H(+). It participates in pyrimidine metabolism; CTP biosynthesis via de novo pathway; CTP from UDP: step 2/2. Allosterically activated by GTP, when glutamine is the substrate; GTP has no effect on the reaction when ammonia is the substrate. The allosteric effector GTP functions by stabilizing the protein conformation that binds the tetrahedral intermediate(s) formed during glutamine hydrolysis. Inhibited by the product CTP, via allosteric rather than competitive inhibition. Catalyzes the ATP-dependent amination of UTP to CTP with either L-glutamine or ammonia as the source of nitrogen. Regulates intracellular CTP levels through interactions with the four ribonucleotide triphosphates. The sequence is that of CTP synthase from Nocardia farcinica (strain IFM 10152).